A 375-amino-acid chain; its full sequence is Ribosomal RNA large subunit methyltransferase G (375 aa).

Belongs to the methyltransferase superfamily. RlmG family.

It is found in the cytoplasm. The enzyme catalyses guanosine(1835) in 23S rRNA + S-adenosyl-L-methionine = N(2)-methylguanosine(1835) in 23S rRNA + S-adenosyl-L-homocysteine + H(+). In terms of biological role, specifically methylates the guanine in position 1835 (m2G1835) of 23S rRNA. This is Ribosomal RNA large subunit methyltransferase G from Stutzerimonas stutzeri (strain A1501) (Pseudomonas stutzeri).